The chain runs to 146 residues: UPF0735 ACT domain-containing protein TTE2621 (146 aa).

The ACT domain occupies 71-146 (TFSMVLEHMP…GVRKIEVLGE (76 aa)).

The protein belongs to the UPF0735 family.

In Caldanaerobacter subterraneus subsp. tengcongensis (strain DSM 15242 / JCM 11007 / NBRC 100824 / MB4) (Thermoanaerobacter tengcongensis), this protein is UPF0735 ACT domain-containing protein TTE2621.